Here is a 273-residue protein sequence, read N- to C-terminus: uncharacterized protein (273 aa).

This is an uncharacterized protein from Acanthamoeba polyphaga (Amoeba).